Consider the following 304-residue polypeptide: UDP-N-acetylenolpyruvoylglucosamine reductase (304 aa).

An FAD-binding PCMH-type domain is found at 33 to 212; the sequence is MGGLADLFLI…KEMMDDLTHK (180 aa). R176 is a catalytic residue. The Proton donor role is filled by S226. E296 is a catalytic residue.

This sequence belongs to the MurB family. FAD serves as cofactor.

The protein resides in the cytoplasm. The enzyme catalyses UDP-N-acetyl-alpha-D-muramate + NADP(+) = UDP-N-acetyl-3-O-(1-carboxyvinyl)-alpha-D-glucosamine + NADPH + H(+). Its pathway is cell wall biogenesis; peptidoglycan biosynthesis. Its function is as follows. Cell wall formation. This Exiguobacterium sibiricum (strain DSM 17290 / CCUG 55495 / CIP 109462 / JCM 13490 / 255-15) protein is UDP-N-acetylenolpyruvoylglucosamine reductase.